The following is a 59-amino-acid chain: MSEVRVRENETLDSALRRFKRQCAMSGIMSEVRKREHYDKPSVKRKKKAEAARRKNAKK.

A compositionally biased stretch (basic and acidic residues) spans 32 to 42; it reads VRKREHYDKPS. Residues 32 to 59 form a disordered region; that stretch reads VRKREHYDKPSVKRKKKAEAARRKNAKK. Over residues 43–59 the composition is skewed to basic residues; sequence VKRKKKAEAARRKNAKK.

Belongs to the bacterial ribosomal protein bS21 family.

This Clostridioides difficile (strain 630) (Peptoclostridium difficile) protein is Small ribosomal subunit protein bS21.